The following is a 177-amino-acid chain: Large ribosomal subunit protein uL6 (177 aa).

It belongs to the universal ribosomal protein uL6 family. As to quaternary structure, part of the 50S ribosomal subunit.

Functionally, this protein binds to the 23S rRNA, and is important in its secondary structure. It is located near the subunit interface in the base of the L7/L12 stalk, and near the tRNA binding site of the peptidyltransferase center. The polypeptide is Large ribosomal subunit protein uL6 (Pseudomonas fluorescens (strain Pf0-1)).